Here is a 490-residue protein sequence, read N- to C-terminus: NADP-reducing hydrogenase subunit HndC (490 aa).

4Fe-4S ferredoxin-type domains follow at residues L433–K462 and Q463–Q490.

This sequence belongs to the complex I 51 kDa subunit family. Heterotetramer composed of HndA, HndB, HndC and HndD subunits. HndC is probably the reducing subunit.

It carries out the reaction H2 + NADP(+) = NADPH + H(+). Inhibited by oxygen. Catalyzes the reduction of NADP in the presence of molecular H2 to yield NADPH. The chain is NADP-reducing hydrogenase subunit HndC (hndC) from Solidesulfovibrio fructosivorans (Desulfovibrio fructosivorans).